A 250-amino-acid chain; its full sequence is Agamous-like MADS-box protein AGL8 homolog (250 aa).

Residues 3 to 57 enclose the MADS-box domain; it reads RGRVQLKRIENKINRQVTFSKRRSGLLKKAHEISVLCDAEVGLIVFSTKGKLFEY. A K-box domain is found at 88–178; sequence PGSWTLEHAK…SKKVKEREKE (91 aa).

In terms of tissue distribution, abundant in vegetative organs.

Its subcellular location is the nucleus. Its function is as follows. Probable transcription factor. In Solanum tuberosum (Potato), this protein is Agamous-like MADS-box protein AGL8 homolog.